The following is a 289-amino-acid chain: MYG1 protein CT_386 (289 aa).

Belongs to the MYG1 family.

The sequence is that of MYG1 protein CT_386 from Chlamydia trachomatis serovar D (strain ATCC VR-885 / DSM 19411 / UW-3/Cx).